The chain runs to 475 residues: Probable UDP-N-acetylglucosamine pyrophosphorylase (475 aa).

The Substrate binding signature appears at 103–106 (LAGG). Residues 103–106 (LAGG), Lys117, Gln194, and Gly220 each bind UTP. Residue Asn221 coordinates substrate. Asp251 contributes to the UTP binding site. A Substrate binding motif is present at residues 301–302 (EY). Residue Lys378 coordinates UTP. Ser405 is modified (phosphoserine). Lys410 is a binding site for substrate.

This sequence belongs to the UDPGP type 1 family.

The protein localises to the cytoplasm. It is found in the nucleus. It carries out the reaction N-acetyl-alpha-D-glucosamine 1-phosphate + UTP + H(+) = UDP-N-acetyl-alpha-D-glucosamine + diphosphate. It functions in the pathway nucleotide-sugar biosynthesis; UDP-N-acetyl-alpha-D-glucosamine biosynthesis; UDP-N-acetyl-alpha-D-glucosamine from N-acetyl-alpha-D-glucosamine 1-phosphate: step 1/1. The sequence is that of Probable UDP-N-acetylglucosamine pyrophosphorylase (uap1) from Schizosaccharomyces pombe (strain 972 / ATCC 24843) (Fission yeast).